The following is a 393-amino-acid chain: MTDVALPTAAPAAFDLPPDSVGVVAPQRMHFAEPLKLRNGSSIAGYDLMVETYGTLNADRSNAVLVCHALNASHHVAGVYADDRRNVGWWDNMVGPGKPLDTNRFFVIGINNLGSCFGSTGPMSLNPATGAPYGAAFPVVTVEDWVNAQARVADAFGITQFAAVMGGSLGGMQAVAWSLMYPDRLRHCIVIASTPKLSAQNIAFNEVARSAILSDPDFHGGNYYAHGVKPKRGLRVARMIGHITYLSDEDMAEKFGRELKSEDIRFSFDVEFQVESYLRYQGDKFAEYFDANTYLLITRALDYFDPALAHGGDLTRAMAQTQASFLVASFGTDWRFAPSRSRELVKALLDNKRPVSYAEIDAPHGHDAFLLDDPRYHNLMRAYYDRIAEEIGA.

One can recognise an AB hydrolase-1 domain in the interval 62-372 (NAVLVCHALN…PHGHDAFLLD (311 aa)). S168 functions as the Nucleophile in the catalytic mechanism. Position 238 (R238) interacts with substrate. Active-site residues include D333 and H366. D367 contacts substrate.

The protein belongs to the AB hydrolase superfamily. MetX family. Homodimer.

It localises to the cytoplasm. It catalyses the reaction L-homoserine + succinyl-CoA = O-succinyl-L-homoserine + CoA. Its pathway is amino-acid biosynthesis; L-methionine biosynthesis via de novo pathway; O-succinyl-L-homoserine from L-homoserine: step 1/1. Its function is as follows. Transfers a succinyl group from succinyl-CoA to L-homoserine, forming succinyl-L-homoserine. The sequence is that of Homoserine O-succinyltransferase from Cupriavidus taiwanensis (strain DSM 17343 / BCRC 17206 / CCUG 44338 / CIP 107171 / LMG 19424 / R1) (Ralstonia taiwanensis (strain LMG 19424)).